The sequence spans 144 residues: MNIALIAHDEKKDEMMMFTRAYEAYFAKNTLYATGTTGQRIMEATALTVHRCKSGPLGGDQEIGAMVARGEIDIVIFLRDPLTAQPHEPDVSALIRLCDVYDLPLATNVGTAEILINGLEQGEFQWREIIRKRHEEEQRKFLTD.

Positions methionine 1 to aspartate 144 constitute an MGS-like domain. Substrate contacts are provided by residues histidine 8, lysine 12, threonine 34 to threonine 37, and serine 54 to glycine 55. Aspartate 60 functions as the Proton donor/acceptor in the catalytic mechanism. Histidine 87 is a binding site for substrate.

The protein belongs to the methylglyoxal synthase family.

The catalysed reaction is dihydroxyacetone phosphate = methylglyoxal + phosphate. Functionally, catalyzes the formation of methylglyoxal from dihydroxyacetone phosphate. This chain is Methylglyoxal synthase, found in Exiguobacterium sibiricum (strain DSM 17290 / CCUG 55495 / CIP 109462 / JCM 13490 / 255-15).